Here is a 328-residue protein sequence, read N- to C-terminus: Probable tRNA-dihydrouridine synthase (328 aa).

18 to 20 (PME) lines the FMN pocket. Catalysis depends on C105, which acts as the Proton donor. FMN-binding positions include K143, 208–210 (NGD), and 232–233 (GR).

The protein belongs to the Dus family. Requires FMN as cofactor.

It catalyses the reaction a 5,6-dihydrouridine in tRNA + NAD(+) = a uridine in tRNA + NADH + H(+). The enzyme catalyses a 5,6-dihydrouridine in tRNA + NADP(+) = a uridine in tRNA + NADPH + H(+). Catalyzes the synthesis of 5,6-dihydrouridine (D), a modified base found in the D-loop of most tRNAs, via the reduction of the C5-C6 double bond in target uridines. This chain is Probable tRNA-dihydrouridine synthase (dus), found in Staphylococcus aureus (strain Mu50 / ATCC 700699).